The sequence spans 138 residues: Phospholipase A2 homolog (138 aa).

An N-terminal signal peptide occupies residues 1–16 (MRALWIVAVWLIGVEG). Disulfide bonds link cysteine 42/cysteine 131, cysteine 44/cysteine 60, cysteine 59/cysteine 111, cysteine 65/cysteine 138, cysteine 66/cysteine 104, cysteine 73/cysteine 97, and cysteine 91/cysteine 102. Residues 121–133 (KKYTYYPNFLCKG) are important for membrane-damaging activities in eukaryotes and bacteria; heparin-binding.

This sequence belongs to the phospholipase A2 family. Group II subfamily. S49 sub-subfamily. Monomer. As to expression, expressed by the venom gland.

Its subcellular location is the secreted. In terms of biological role, snake venom phospholipase A2 homolog that lacks enzymatic activity. Shows high myotoxin activities and displays edema-inducing activities. Has cytotoxic activities against HUVEC cells (LC(50)=5.0 uL) and human lung adenocarcinoma A549 cells (LC(50)=5.2 uL). The polypeptide is Phospholipase A2 homolog (Echis ocellatus (Ocellated saw-scaled viper)).